Reading from the N-terminus, the 341-residue chain is Anthranilate phosphoribosyltransferase (341 aa).

5-phospho-alpha-D-ribose 1-diphosphate is bound by residues G79, 82 to 83, T87, 89 to 92, 107 to 115, and S119; these read GD, NIST, and KHGNRAVSS. G79 is a binding site for anthranilate. Mg(2+) is bound at residue S91. Residue N110 participates in anthranilate binding. R165 is an anthranilate binding site. Residues D224 and E225 each coordinate Mg(2+).

This sequence belongs to the anthranilate phosphoribosyltransferase family. Homodimer. Mg(2+) is required as a cofactor.

It catalyses the reaction N-(5-phospho-beta-D-ribosyl)anthranilate + diphosphate = 5-phospho-alpha-D-ribose 1-diphosphate + anthranilate. The protein operates within amino-acid biosynthesis; L-tryptophan biosynthesis; L-tryptophan from chorismate: step 2/5. Functionally, catalyzes the transfer of the phosphoribosyl group of 5-phosphorylribose-1-pyrophosphate (PRPP) to anthranilate to yield N-(5'-phosphoribosyl)-anthranilate (PRA). This chain is Anthranilate phosphoribosyltransferase, found in Bacillus cereus (strain AH187).